A 619-amino-acid chain; its full sequence is Polyadenylate-binding protein 1-like (619 aa).

RRM domains are found at residues 11 to 89 (ASLY…WSQR), 99 to 175 (GNIF…HFKS), 191 to 268 (TNIY…RAQK), and 294 to 370 (VNLY…LAQR). The segment at 431 to 458 (PAPRWTSQPPRPSSAYPPGASMVRPPVV) is disordered. In terms of domain architecture, PABC spans 533–610 (QEPLTASMLA…AVAVLQAHQA (78 aa)).

The protein belongs to the polyadenylate-binding protein type-1 family. As to expression, expressed in ovary and testis. Also expressed in pancreas, liver and thymus, and at lower levels in other somatic tissues including brain and lung.

Its subcellular location is the cytoplasm. Its function is as follows. Poly(A)-binding protein involved in oocyte maturation and early embryo development. It is required for cytosolic mRNA polyadenylation and translational activation of maternally stored mRNA in oocytes. This chain is Polyadenylate-binding protein 1-like, found in Homo sapiens (Human).